The primary structure comprises 565 residues: NAD-dependent malic enzyme (565 aa).

The active-site Proton donor is the Y104. Residue R157 participates in NAD(+) binding. Catalysis depends on K175, which acts as the Proton acceptor. Residues E246, D247, and D270 each coordinate a divalent metal cation. NAD(+)-binding residues include D270 and N418.

Belongs to the malic enzymes family. In terms of assembly, homotetramer. It depends on Mg(2+) as a cofactor. Mn(2+) is required as a cofactor.

The enzyme catalyses (S)-malate + NAD(+) = pyruvate + CO2 + NADH. The catalysed reaction is oxaloacetate + H(+) = pyruvate + CO2. This chain is NAD-dependent malic enzyme, found in Escherichia coli O139:H28 (strain E24377A / ETEC).